The chain runs to 250 residues: rRNA methyltransferase 2, mitochondrial (250 aa).

The transit peptide at 1–35 directs the protein to the mitochondrion; it reads MRLVFTGNCVFKRLLHTEIGGKYAKQQPRNLKGRS. Residues 90 to 93, Asp-119, 136 to 137, and Asp-161 each bind S-adenosyl-L-methionine; these read PGSW and DF. Lys-201 (proton acceptor) is an active-site residue.

It belongs to the class I-like SAM-binding methyltransferase superfamily. RNA methyltransferase RlmE family.

Its subcellular location is the mitochondrion. The enzyme catalyses a uridine in rRNA + S-adenosyl-L-methionine = a 2'-O-methyluridine in rRNA + S-adenosyl-L-homocysteine + H(+). Its function is as follows. S-adenosyl-L-methionine-dependent 2'-O-ribose methyltransferase that catalyzes the formation of 2'-O-methyluridine at position 1579 (Um1579) in the mitochondrial large subunit ribosomal RNA (mtLSU rRNA), a universally conserved modification in the peptidyl transferase domain of the mtLSU rRNA. This activity may require prior 2'-O-methylguanosine modification at position 1580 (Gm1580) by MRM3. Essential for late-stage assembly of mtLSU required for efficient translation of mitochondrial DNA encoded proteins; methyltransferase activity is not required for this function. Essential for mitochondrial respiratory function. The chain is rRNA methyltransferase 2, mitochondrial from Drosophila melanogaster (Fruit fly).